Reading from the N-terminus, the 467-residue chain is MSVNDSTHIKTRFAPSPTGYLHVGGARTALFNYLFAKKFGGTFLLRIEDTDPERSKPEYSEQILISMKWLGLDWDEGPYHQSERMHIYQQYTQKLLEEGKAYRCFCTTEELEQMREQQRQQGLPTRYDGRCSRLTQEEIEERLNKGMPFAVRLKVPQDRGIIAWDDMVKGHIEINSSELDDFILVRSDGTPTYNFAVVIDDHTMGVTHVLRGEDHIPNTPKQILIYEALGWETPEFGHVPMILGKDKTKLSKRHGAVGVEAYRDEGFLPEALFNFLALLGASYDPDREVYTKQELIDLFDPKKIGLHPAVFDPDKLYYINREHMKMLPPEELLDRIRPFAEAKGFQIEPYHLRLIPLLVERMRTLKDFVELADYIFTDDFTVDEKAQELLAKDLPLGGLAEQLDATVWDADHIEAVLRQYAQDKGIKPRDYFPFIRAVISGKSVGPSLFHLMEAMPKDMVLRRLRKS.

Residues P15–G25 carry the 'HIGH' region motif. The 'KMSKS' region signature appears at K249–R253. K252 is an ATP binding site.

It belongs to the class-I aminoacyl-tRNA synthetase family. Glutamate--tRNA ligase type 1 subfamily. As to quaternary structure, monomer.

The protein resides in the cytoplasm. It catalyses the reaction tRNA(Glu) + L-glutamate + ATP = L-glutamyl-tRNA(Glu) + AMP + diphosphate. Functionally, catalyzes the attachment of glutamate to tRNA(Glu) in a two-step reaction: glutamate is first activated by ATP to form Glu-AMP and then transferred to the acceptor end of tRNA(Glu). The polypeptide is Glutamate--tRNA ligase (Coprothermobacter proteolyticus (strain ATCC 35245 / DSM 5265 / OCM 4 / BT)).